The following is a 576-amino-acid chain: Probable vesicular glutamate transporter eat-4 (576 aa).

Residues 1–69 lie on the Cytoplasmic side of the membrane; it reads MSSWNEAWDR…QTWIGKCRKR (69 aa). The tract at residues 25–46 is disordered; it reads AAASATGAAPPQQMQEEGNENP. Residues 36 to 46 are compositionally biased toward polar residues; it reads QQMQEEGNENP. A helical transmembrane segment spans residues 70–90; it reads WLLAILANMGFMISFGIRCNF. Topologically, residues 91 to 121 are extracellular; that stretch reads GAAKTHMYKNYTDPYGKVHMHEFNWTIDELS. Asn-100 and Asn-114 each carry an N-linked (GlcNAc...) asparagine glycan. Residues 122–142 traverse the membrane as a helical segment; sequence VMESSYFYGYLVTQIPAGFLA. Residues 143 to 150 lie on the Cytoplasmic side of the membrane; the sequence is AKFPPNKL. A helical transmembrane segment spans residues 151–171; that stretch reads FGFGIGVGAFLNILLPYGFKV. At 172–174 the chain is on the extracellular side; the sequence is KSD. Residues 175–195 form a helical membrane-spanning segment; sequence YLVAFIQITQGLVQGVCYPAM. Topologically, residues 196 to 213 are cytoplasmic; it reads HGVWRYWAPPMERSKLAT. Residues 214 to 234 traverse the membrane as a helical segment; the sequence is TAFTGSYAGAVLGLPLSAFLV. Residues 235–239 are Extracellular-facing; the sequence is SYVSW. A helical transmembrane segment spans residues 240–260; the sequence is AAPFYLYGVCGVIWAILWFCV. At 261–305 the chain is on the cytoplasmic side; it reads TFEKPAFHPTISQEEKIFIEDAIGHVSNTHPTIRSIPWKAIVTSK. A helical membrane pass occupies residues 306–325; it reads PVWAIIVANFARSWTFYLLL. Residues 326–344 lie on the Extracellular side of the membrane; that stretch reads QNQLTYMKEALGMKIADSG. A helical transmembrane segment spans residues 345–365; it reads LLAAIPHLVMGCVVLMGGQLA. Topologically, residues 366–381 are cytoplasmic; the sequence is DYLRSNKILSTTAVRK. The helical transmembrane segment at 382–402 threads the bilayer; it reads IFNCGGFGGEAAFMLIVAYTT. Residues 403 to 406 lie on the Extracellular side of the membrane; the sequence is SDTT. Residues 407–427 form a helical membrane-spanning segment; that stretch reads AIMALIAAVGMSGFAISGFNV. Topologically, residues 428-437 are cytoplasmic; sequence NHLDIAPRYA. A helical membrane pass occupies residues 438-458; sequence AILMGFSNGIGTLAGLTCPFV. Topologically, residues 459–471 are extracellular; it reads TEAFTAHSKHGWT. A helical membrane pass occupies residues 472–492; that stretch reads SVFLLASLIHFTGVTFYAVYA. Over 493–576 the chain is Cytoplasmic; sequence SGELQEWAEP…VVENPHYQQW (84 aa).

This sequence belongs to the major facilitator superfamily. Sodium/anion cotransporter family. VGLUT subfamily. Expressed in neurons of the pharynx and the extrapharyngeal nervous system. Highly expressed in male PHC sensory neurons.

It is found in the cell membrane. The protein resides in the synapse. In terms of biological role, required for glutamatergic synaptic transmission. In AWB and AWC sensory neurons, required for the detection of preferred food sources, probably via glutamatergic neurotransmission from sensory neurons. Negatively regulates the turning step of male mating behavior. The chain is Probable vesicular glutamate transporter eat-4 from Caenorhabditis elegans.